A 483-amino-acid chain; its full sequence is Shaker-related potassium channel tsha2 (483 aa).

The Cytoplasmic portion of the chain corresponds to 1–165 (MTVVSCEIQD…YPESSGPARM (165 aa)). The helical transmembrane segment at 166–186 (IAVVSVSVIVISIVIFCLETL) threads the bilayer. Residues 187–220 (PQFREDTSANLPLSNHHTTNGTTLHKKPNLFTDP) lie on the Extracellular side of the membrane. The helical transmembrane segment at 221-241 (FFMVETLCIVWFSFEFLVRFL) threads the bilayer. The Cytoplasmic segment spans residues 242 to 252 (SCPSKPAFFKN). C243 carries the S-palmitoyl cysteine lipid modification. The helical transmembrane segment at 253 to 273 (AMNSIDILAIAPYFITLGLEL) threads the bilayer. The Extracellular portion of the chain corresponds to 274–324 (AEQQEAGSEQAMSLAILRVIRLVRVFRIFKLSRHSKGLQILGQTLHASISE). Residues 325–345 (LGLLIFFLLIGVILFSSAVYF) form a helical; Voltage-sensor membrane-spanning segment. Residues 346-353 (AEADDPES) lie on the Cytoplasmic side of the membrane. A helical transmembrane segment spans residues 354 to 374 (GFSSIPAAFWWAVVSMTTVGY). The Selectivity filter signature appears at 371–376 (TVGYGD). The Extracellular portion of the chain corresponds to 375–385 (GDMCPVTIGGK). Residues 386–406 (IVGSMCAIAGVLTIALPVPVI) traverse the membrane as a helical segment. At 407–483 (VSNFNYFYHR…EHYTGKLTDV (77 aa)) the chain is on the cytoplasmic side. Position 426 is a phosphotyrosine (Y426). T430 is modified (phosphothreonine). The span at 440–452 (EFKSTSDSRQSLT) shows a compositional bias: polar residues. A disordered region spans residues 440–459 (EFKSTSDSRQSLTKSEDTEE). The PDZ-binding motif lies at 481–483 (TDV).

It belongs to the potassium channel family. A (Shaker) (TC 1.A.1.2) subfamily. Heterotetramer of potassium channel proteins. Binds PDZ domains of dlg1, dlg2 and dlg4. In terms of tissue distribution, expressed in oligodendrocytes and astrocytes.

The protein resides in the membrane. Functionally, mediates the voltage-dependent potassium ion permeability of excitable membranes. Assuming opened or closed conformations in response to the voltage difference across the membrane, the protein forms a potassium-selective channel through which potassium ions may pass in accordance with their electrochemical gradient. In Oncorhynchus mykiss (Rainbow trout), this protein is Shaker-related potassium channel tsha2.